We begin with the raw amino-acid sequence, 72 residues long: Translation initiation factor IF-1 (72 aa).

In terms of domain architecture, S1-like spans Met-1 to Lys-72.

Belongs to the IF-1 family. In terms of assembly, component of the 30S ribosomal translation pre-initiation complex which assembles on the 30S ribosome in the order IF-2 and IF-3, IF-1 and N-formylmethionyl-tRNA(fMet); mRNA recruitment can occur at any time during PIC assembly.

It is found in the cytoplasm. Its function is as follows. One of the essential components for the initiation of protein synthesis. Stabilizes the binding of IF-2 and IF-3 on the 30S subunit to which N-formylmethionyl-tRNA(fMet) subsequently binds. Helps modulate mRNA selection, yielding the 30S pre-initiation complex (PIC). Upon addition of the 50S ribosomal subunit IF-1, IF-2 and IF-3 are released leaving the mature 70S translation initiation complex. This is Translation initiation factor IF-1 from Nitrosospira multiformis (strain ATCC 25196 / NCIMB 11849 / C 71).